A 76-amino-acid polypeptide reads, in one-letter code: MKILDRINELANKEKVQPLTVAEKQEQHALRQDYLSMIRGQVLTTFSTIKVVDPIGQDVTPDKVYDLRQQYGYIQN.

The protein belongs to the UPF0291 family.

The protein localises to the cytoplasm. This chain is UPF0291 protein MW2494, found in Staphylococcus aureus (strain MW2).